Consider the following 391-residue polypeptide: 4-hydroxy-3-methylbut-2-en-1-yl diphosphate synthase (flavodoxin) (391 aa).

Positions 282, 285, 317, and 324 each coordinate [4Fe-4S] cluster.

Belongs to the IspG family. Requires [4Fe-4S] cluster as cofactor.

It carries out the reaction (2E)-4-hydroxy-3-methylbut-2-enyl diphosphate + oxidized [flavodoxin] + H2O + 2 H(+) = 2-C-methyl-D-erythritol 2,4-cyclic diphosphate + reduced [flavodoxin]. It participates in isoprenoid biosynthesis; isopentenyl diphosphate biosynthesis via DXP pathway; isopentenyl diphosphate from 1-deoxy-D-xylulose 5-phosphate: step 5/6. Functionally, converts 2C-methyl-D-erythritol 2,4-cyclodiphosphate (ME-2,4cPP) into 1-hydroxy-2-methyl-2-(E)-butenyl 4-diphosphate. The polypeptide is 4-hydroxy-3-methylbut-2-en-1-yl diphosphate synthase (flavodoxin) (Acidothermus cellulolyticus (strain ATCC 43068 / DSM 8971 / 11B)).